Consider the following 169-residue polypeptide: Peptide deformylase (169 aa).

Residues C91 and H133 each coordinate Fe cation. E134 is an active-site residue. Residue H137 coordinates Fe cation.

This sequence belongs to the polypeptide deformylase family. The cofactor is Fe(2+).

It catalyses the reaction N-terminal N-formyl-L-methionyl-[peptide] + H2O = N-terminal L-methionyl-[peptide] + formate. Removes the formyl group from the N-terminal Met of newly synthesized proteins. Requires at least a dipeptide for an efficient rate of reaction. N-terminal L-methionine is a prerequisite for activity but the enzyme has broad specificity at other positions. The chain is Peptide deformylase from Escherichia coli (strain K12 / DH10B).